The primary structure comprises 336 residues: Ketol-acid reductoisomerase (NADP(+)) (336 aa).

A KARI N-terminal Rossmann domain is found at 2–182; it reads AKIYYQQDCN…GGARAGVLET (181 aa). NADP(+)-binding positions include 25-28, S51, S53, and 83-86; these read YGSQ and DEKQ. Residue H108 is part of the active site. An NADP(+)-binding site is contributed by G134. The 146-residue stretch at 183-328 folds into the KARI C-terminal knotted domain; sequence TFREETETDL…AELRGLMSWT (146 aa). Residues D191, E195, E227, and E231 each coordinate Mg(2+). S252 is a substrate binding site.

Belongs to the ketol-acid reductoisomerase family. Mg(2+) serves as cofactor.

It catalyses the reaction (2R)-2,3-dihydroxy-3-methylbutanoate + NADP(+) = (2S)-2-acetolactate + NADPH + H(+). The catalysed reaction is (2R,3R)-2,3-dihydroxy-3-methylpentanoate + NADP(+) = (S)-2-ethyl-2-hydroxy-3-oxobutanoate + NADPH + H(+). It functions in the pathway amino-acid biosynthesis; L-isoleucine biosynthesis; L-isoleucine from 2-oxobutanoate: step 2/4. The protein operates within amino-acid biosynthesis; L-valine biosynthesis; L-valine from pyruvate: step 2/4. In terms of biological role, involved in the biosynthesis of branched-chain amino acids (BCAA). Catalyzes an alkyl-migration followed by a ketol-acid reduction of (S)-2-acetolactate (S2AL) to yield (R)-2,3-dihydroxy-isovalerate. In the isomerase reaction, S2AL is rearranged via a Mg-dependent methyl migration to produce 3-hydroxy-3-methyl-2-ketobutyrate (HMKB). In the reductase reaction, this 2-ketoacid undergoes a metal-dependent reduction by NADPH to yield (R)-2,3-dihydroxy-isovalerate. The sequence is that of Ketol-acid reductoisomerase (NADP(+)) from Lachnoclostridium phytofermentans (strain ATCC 700394 / DSM 18823 / ISDg) (Clostridium phytofermentans).